The chain runs to 318 residues: L-lactate dehydrogenase (318 aa).

Residues valine 18, aspartate 39, lysine 44, tyrosine 69, and 83 to 84 (GA) contribute to the NAD(+) site. Substrate-binding residues include glutamine 86 and arginine 92. Residues serine 105, 122-124 (VSN), and serine 147 each bind NAD(+). 124–127 (NPVD) lines the substrate pocket. 152 to 155 (DTSR) provides a ligand contact to substrate. Histidine 179 (proton acceptor) is an active-site residue. Tyrosine 225 is modified (phosphotyrosine). Position 234 (threonine 234) interacts with substrate.

The protein belongs to the LDH/MDH superfamily. LDH family. Homotetramer.

Its subcellular location is the cytoplasm. The enzyme catalyses (S)-lactate + NAD(+) = pyruvate + NADH + H(+). It functions in the pathway fermentation; pyruvate fermentation to lactate; (S)-lactate from pyruvate: step 1/1. Catalyzes the conversion of lactate to pyruvate. The chain is L-lactate dehydrogenase from Clostridium botulinum (strain Okra / Type B1).